The chain runs to 445 residues: Phosphoglucosamine mutase (445 aa).

Residue Ser-101 is the Phosphoserine intermediate of the active site. The Mg(2+) site is built by Ser-101, Asp-240, Asp-242, and Asp-244. Phosphoserine is present on Ser-101.

The protein belongs to the phosphohexose mutase family. Mg(2+) serves as cofactor. In terms of processing, activated by phosphorylation.

It catalyses the reaction alpha-D-glucosamine 1-phosphate = D-glucosamine 6-phosphate. Functionally, catalyzes the conversion of glucosamine-6-phosphate to glucosamine-1-phosphate. This chain is Phosphoglucosamine mutase, found in Pseudomonas fluorescens (strain Pf0-1).